Here is a 632-residue protein sequence, read N- to C-terminus: Arginyl-tRNA--protein transferase 1 (632 aa).

Residues 1 to 18 (MSLKNDASSSHDGGSNRE) are compositionally biased toward polar residues. 4 disordered regions span residues 1 to 27 (MSLK…HGRR), 113 to 144 (KLDV…AKSE), 284 to 312 (NGNI…HQAR), and 517 to 580 (PAAS…NDIN). Residues 113 to 122 (KLDVQPREQR) show a composition bias toward basic and acidic residues. The span at 285-296 (GNISRGANSLDG) shows a compositional bias: polar residues. The span at 298 to 310 (ETLHAKKDSENHQ) shows a compositional bias: basic and acidic residues. The span at 538–563 (SDEDEDEDEDDDDDDDDDEEMYETES) shows a compositional bias: acidic residues. The segment covering 564–578 (EDSHIESDPGSKDND) has biased composition (basic and acidic residues).

The protein belongs to the R-transferase family.

The catalysed reaction is an N-terminal L-alpha-aminoacyl-[protein] + L-arginyl-tRNA(Arg) = an N-terminal L-arginyl-L-aminoacyl-[protein] + tRNA(Arg) + H(+). Involved in the post-translational conjugation of arginine to the N-terminal aspartate or glutamate of a protein. This arginylation is required for degradation of the protein via the ubiquitin pathway. Component of the N-end rule pathway with ATE2 and PRT6. The N-end rule pathway regulates seed after-ripening, seedling sugar sensitivity, seedling lipid breakdown, and abscisic acid (ABA) sensitivity of germination. The end-rule pathway regulates various aspects of leaf and shoot development. Involved in the oxygen-dependent N-arginylation of RAP2-12, an activator of hypoxic gene expression. This N-terminal modification leads to ubiquitination by PRT6 and subsequent degradation of RAP2-12 under aerobic conditions. Has an important role in the progression of leaf senescence. Involved in disease resistance. The end-rule pathway plays a role in regulating the timing and amplitude of the immune response following infection with the bacterial pathogen Pseudomonas syringae pv tomato. Regulates the biosynthesis of plant-defense metabolites such as glucosinolates, and the biosynthesis and response to the phytohormone jasmonate (JA), which plays a key role in plant immunity. This is Arginyl-tRNA--protein transferase 1 from Arabidopsis thaliana (Mouse-ear cress).